The following is a 152-amino-acid chain: Large ribosomal subunit protein bL9 (152 aa).

Belongs to the bacterial ribosomal protein bL9 family.

Functionally, binds to the 23S rRNA. This Chlorobaculum tepidum (strain ATCC 49652 / DSM 12025 / NBRC 103806 / TLS) (Chlorobium tepidum) protein is Large ribosomal subunit protein bL9.